Reading from the N-terminus, the 559-residue chain is CCR4-NOT transcription complex subunit 6-like (559 aa).

A required for interaction with cnot1, cnot3 and cnot7 region spans residues 1 to 148 (MPKEKYDPPD…LYQEPDGTRK (148 aa)). Residues 1–550 (MPKEKYDPPD…NGLHLPVHST (550 aa)) form a nuclease domain region. 4 LRR repeats span residues 52 to 73 (HLTA…IAKL), 75 to 96 (HLVY…LGNM), 98 to 120 (TLRE…GRLF), and 121 to 143 (QLQT…YQEP). Glutamate 235 contacts Mg(2+). Substrate is bound by residues glutamate 235, glutamate 271, histidine 353, and proline 358. A Mg(2+)-binding site is contributed by aspartate 405. Residue aspartate 405 is the Proton donor/acceptor of the active site. Positions 407, 474, and 479 each coordinate substrate.

Belongs to the CCR4/nocturin family. Component of the CCR4-NOT complex. Mg(2+) is required as a cofactor.

The protein resides in the cytoplasm. It is found in the nucleus. The enzyme catalyses Exonucleolytic cleavage of poly(A) to 5'-AMP.. Its function is as follows. Poly(A) nuclease with 3'-5' RNase activity. Catalytic component of the CCR4-NOT complex which is one of the major cellular mRNA deadenylases and is linked to various cellular processes including bulk mRNA degradation, miRNA-mediated repression, translational repression during translational initiation and general transcription regulation. Additional complex functions may be a consequence of its influence on mRNA expression. The protein is CCR4-NOT transcription complex subunit 6-like (cnot6l) of Danio rerio (Zebrafish).